We begin with the raw amino-acid sequence, 1076 residues long: DNA-directed RNA polymerase subunit beta (1076 aa).

This sequence belongs to the RNA polymerase beta chain family. In plastids the minimal PEP RNA polymerase catalytic core is composed of four subunits: alpha, beta, beta', and beta''. When a (nuclear-encoded) sigma factor is associated with the core the holoenzyme is formed, which can initiate transcription.

Its subcellular location is the plastid. It localises to the chloroplast. The enzyme catalyses RNA(n) + a ribonucleoside 5'-triphosphate = RNA(n+1) + diphosphate. Functionally, DNA-dependent RNA polymerase catalyzes the transcription of DNA into RNA using the four ribonucleoside triphosphates as substrates. The sequence is that of DNA-directed RNA polymerase subunit beta from Lolium perenne (Perennial ryegrass).